The primary structure comprises 38 residues: Spheniscin-2 (38 aa).

Intrachain disulfides connect cysteine 5/cysteine 33, cysteine 12/cysteine 27, and cysteine 17/cysteine 34.

As to quaternary structure, monomer. Secreted into the stomach cavity.

It localises to the secreted. In terms of biological role, has antifungal activity and antibacterial activity against Gram-positive and Gram-negative bacteria. Involved in the process of food preservation in the stomach during the incubation fast. May also be present during infection. The chain is Spheniscin-2 from Aptenodytes patagonicus (King penguin).